A 476-amino-acid polypeptide reads, in one-letter code: Efflux pump atB (476 aa).

Residues 1-38 (MAPQLAGSSHSSSASDQAHRQSSDPALESGSDTHVGSI) are disordered. 10 consecutive transmembrane segments (helical) span residues 69–89 (LIVAIVSSTRLGLSPMILAPL), 96–116 (KPVYVVSMFFFVVWIIPCAVA), 127–147 (FFNGFAGAAFLSVAGGTVGDL), 186–206 (WSFYILLIWAFAQWVSISLLV), 264–284 (LLLCLFCSVLLGVLYLFFGAF), 294–314 (FNLWQVGLSFLGITVGMIIGI), 347–367 (LPPAVGGAPLVTIGLLWFAWT), 372–392 (VHWIVPIIGSGIFGAGVIMIF), 403–425 (YPLYAASALAANSFSRSMFAAAF), and 440–460 (WAGFLLAMITLLLAPFPYIFY).

The protein belongs to the major facilitator superfamily.

The protein localises to the cell membrane. Efflux pump that might be required for efficient secretion of terreic acid. This is Efflux pump atB from Aspergillus terreus (strain NIH 2624 / FGSC A1156).